We begin with the raw amino-acid sequence, 295 residues long: Polyisoprenoid diphosphate/phosphate phosphohydrolase PLPP6 (295 aa).

Disordered regions lie at residues 1–39 and 61–90; these read MPSP…SRFE and SESP…PEED. Topologically, residues 1 to 132 are cytoplasmic; the sequence is MPSPRRSMEG…ESSSWGSVRP (132 aa). The segment covering 16 to 27 has biased composition (low complexity); that stretch reads SASSSSSSPGSP. Phosphoserine occurs at positions 26, 36, and 70. A helical membrane pass occupies residues 133 to 153; sequence LMKLLEISGHGIPWLLGTLYC. Residues 154 to 164 are Lumenal-facing; the sequence is LCRSDSWAGRE. Residues 165–185 traverse the membrane as a helical segment; it reads VLMNLLFALLLDLLLVALIKG. The phosphatase sequence motif I stretch occupies residues 184 to 192; the sequence is KGLVRRRRP. Residues 186–228 are Cytoplasmic-facing; the sequence is LVRRRRPAHNQMDMFVTLSVDKYSFPSGHATRAALMSRFILNH. Residues 211 to 214 form a phosphatase sequence motif II region; sequence PSGH. Histidine 214 serves as the catalytic Proton donors. The chain crosses the membrane as a helical span at residues 229-249; it reads LVLAIPLRVLVVLWAFVLGLS. Residues 249-260 are phosphatase sequence motif III; that stretch reads SRVMLGRHNVTD. Topologically, residues 250-260 are lumenal; that stretch reads RVMLGRHNVTD. Histidine 256 (nucleophile) is an active-site residue. The chain crosses the membrane as a helical span at residues 261–281; it reads VAFGFFLGYMQYSIVDYCWLS. The Cytoplasmic portion of the chain corresponds to 282 to 295; it reads PHNAPVLFLLWSQR.

This sequence belongs to the PA-phosphatase related phosphoesterase family. In terms of processing, phosphorylation by PKC activates the phosphatase activity towards presqualene diphosphate. As to expression, widely expressed. Expressed in most organs, in particular gastrointestinal organs, spleen, placenta, kidney, thymus and brain.

It is found in the endoplasmic reticulum membrane. The protein localises to the nucleus envelope. It localises to the nucleus inner membrane. It carries out the reaction presqualene diphosphate + H2O = presqualene phosphate + phosphate + H(+). The enzyme catalyses presqualene phosphate + H2O = presqualene alcohol + phosphate. The catalysed reaction is (2E,6E)-farnesyl diphosphate + H2O = (2E,6E)-farnesyl phosphate + phosphate + H(+). It catalyses the reaction (2E,6E)-farnesyl phosphate + H2O = (2E,6E)-farnesol + phosphate. It carries out the reaction (2E,6E,10E)-geranylgeranyl diphosphate + H2O = (2E,6E,10E)-geranylgeranyl phosphate + phosphate + H(+). The enzyme catalyses (2E,6E,10E)-geranylgeranyl phosphate + H2O = (2E,6E,10E)-geranylgeraniol + phosphate. The catalysed reaction is (2E)-geranyl diphosphate + H2O = (2E)-geranyl phosphate + phosphate + H(+). It catalyses the reaction (2E)-geranyl phosphate + H2O = (2E)-geraniol + phosphate. It carries out the reaction 1,2-dihexadecanoyl-sn-glycero-3-phosphate + H2O = 1,2-dihexadecanoyl-sn-glycerol + phosphate. Inhibited by propranolol. Not inhibited by N-ethylmaleimide or bromoenolactome. In terms of biological role, magnesium-independent polyisoprenoid diphosphatase that catalyzes the sequential dephosphorylation of presqualene, farnesyl, geranyl and geranylgeranyl diphosphates. Functions in the innate immune response through the dephosphorylation of presqualene diphosphate which acts as a potent inhibitor of the signaling pathways contributing to polymorphonuclear neutrophils activation. May regulate the biosynthesis of cholesterol and related sterols by dephosphorylating presqualene and farnesyl diphosphate, two key intermediates in this biosynthetic pathway. May also play a role in protein prenylation by acting on farnesyl diphosphate and its derivative geranylgeranyl diphosphate, two precursors for the addition of isoprenoid anchors to membrane proteins. Has a lower activity towards phosphatidic acid (PA), but through phosphatidic acid dephosphorylation may participate in the biosynthesis of phospholipids and triacylglycerols. May also act on ceramide-1-P, lysophosphatidic acid (LPA) and sphing-4-enine 1-phosphate/sphingosine-1-phosphate. This is Polyisoprenoid diphosphate/phosphate phosphohydrolase PLPP6 from Homo sapiens (Human).